The chain runs to 132 residues: Phosphoribosyl-AMP cyclohydrolase (132 aa).

Asp79 is a binding site for Mg(2+). Zn(2+) is bound at residue Cys80. 2 residues coordinate Mg(2+): Asp81 and Asp83. Zn(2+) contacts are provided by Cys100 and Cys107.

The protein belongs to the PRA-CH family. As to quaternary structure, homodimer. Mg(2+) is required as a cofactor. It depends on Zn(2+) as a cofactor.

Its subcellular location is the cytoplasm. It carries out the reaction 1-(5-phospho-beta-D-ribosyl)-5'-AMP + H2O = 1-(5-phospho-beta-D-ribosyl)-5-[(5-phospho-beta-D-ribosylamino)methylideneamino]imidazole-4-carboxamide. Its pathway is amino-acid biosynthesis; L-histidine biosynthesis; L-histidine from 5-phospho-alpha-D-ribose 1-diphosphate: step 3/9. Catalyzes the hydrolysis of the adenine ring of phosphoribosyl-AMP. The protein is Phosphoribosyl-AMP cyclohydrolase of Delftia acidovorans (strain DSM 14801 / SPH-1).